Consider the following 172-residue polypeptide: SsrA-binding protein (172 aa).

This sequence belongs to the SmpB family.

It is found in the cytoplasm. Required for rescue of stalled ribosomes mediated by trans-translation. Binds to transfer-messenger RNA (tmRNA), required for stable association of tmRNA with ribosomes. tmRNA and SmpB together mimic tRNA shape, replacing the anticodon stem-loop with SmpB. tmRNA is encoded by the ssrA gene; the 2 termini fold to resemble tRNA(Ala) and it encodes a 'tag peptide', a short internal open reading frame. During trans-translation Ala-aminoacylated tmRNA acts like a tRNA, entering the A-site of stalled ribosomes, displacing the stalled mRNA. The ribosome then switches to translate the ORF on the tmRNA; the nascent peptide is terminated with the 'tag peptide' encoded by the tmRNA and targeted for degradation. The ribosome is freed to recommence translation, which seems to be the essential function of trans-translation. In Dehalococcoides mccartyi (strain ATCC BAA-2266 / KCTC 15142 / 195) (Dehalococcoides ethenogenes (strain 195)), this protein is SsrA-binding protein.